We begin with the raw amino-acid sequence, 160 residues long: Ribosomal RNA large subunit methyltransferase H (160 aa).

2 residues coordinate S-adenosyl-L-methionine: leucine 76 and glycine 108.

The protein belongs to the RNA methyltransferase RlmH family. Homodimer.

The protein resides in the cytoplasm. It carries out the reaction pseudouridine(1915) in 23S rRNA + S-adenosyl-L-methionine = N(3)-methylpseudouridine(1915) in 23S rRNA + S-adenosyl-L-homocysteine + H(+). Specifically methylates the pseudouridine at position 1915 (m3Psi1915) in 23S rRNA. This is Ribosomal RNA large subunit methyltransferase H from Rhodopseudomonas palustris (strain BisB18).